The following is a 1972-amino-acid chain: Myosin-11 (1972 aa).

A phosphoserine mark is found at serine 8, serine 23, and serine 40. Residues 31–81 form the Myosin N-terminal SH3-like domain; that stretch reads VAKKLVWVPSEKQGFEAASIKEEKGDEVVVELVENGKKVTVGKDDIQKMNP. The region spanning 85–783 is the Myosin motor domain; that stretch reads SKVEDMAELT…VLAHLEEERD (699 aa). Lysine 129 is subject to N6,N6,N6-trimethyllysine. ATP is bound at residue 178–185; sequence GESGAGKT. Actin-binding regions lie at residues 661 to 683 and 762 to 776; these read LGKL…IPNH and RIGQ…GVLA. The region spanning 786–815 is the IQ domain; it reads ITDVIMAFQAMCRGYLARKAFTKRQQQLTA. The stretch at 844-1934 forms a coiled coil; sequence LLQVTRQEEE…KSKLRRGNEA (1091 aa). Residue threonine 1177 is modified to Phosphothreonine. A phosphoserine mark is found at serine 1684 and serine 1722. A compositionally biased stretch (polar residues) spans 1771–1788; that stretch reads NELATERSTAQKNESARQ. Disordered stretches follow at residues 1771–1797 and 1867–1972; these read NELA…NKEL and QYKE…KASE. The span at 1867–1876 shows a compositional bias: basic and acidic residues; that stretch reads QYKEQAEKGN. Residues 1935 to 1972 form a C-terminal region; that stretch reads SFVPSRRAGGRRVIENTDGSEEEMDARDSDFNGTKASE. A Phosphothreonine modification is found at threonine 1951. Phosphoserine occurs at positions 1954 and 1971.

The protein belongs to the TRAFAC class myosin-kinesin ATPase superfamily. Myosin family. As to quaternary structure, muscle myosin is a hexameric protein that consists of 2 heavy chain subunits (MHC), 2 alkali light chain subunits (MLC) and 2 regulatory light chain subunits (MLC-2).

Its subcellular location is the melanosome. It is found in the cytoplasm. The protein localises to the myofibril. Its function is as follows. Muscle contraction. This chain is Myosin-11 (Myh11), found in Mus musculus (Mouse).